The primary structure comprises 223 residues: Thiamine-phosphate synthase (223 aa).

4-amino-2-methyl-5-(diphosphooxymethyl)pyrimidine is bound by residues Gln45 to Lys49 and Asn77. Mg(2+) contacts are provided by Asp78 and Asp97. A 4-amino-2-methyl-5-(diphosphooxymethyl)pyrimidine-binding site is contributed by Thr116. A 2-[(2R,5Z)-2-carboxy-4-methylthiazol-5(2H)-ylidene]ethyl phosphate-binding site is contributed by Ser142–Thr144. Residue Lys145 coordinates 4-amino-2-methyl-5-(diphosphooxymethyl)pyrimidine. 2-[(2R,5Z)-2-carboxy-4-methylthiazol-5(2H)-ylidene]ethyl phosphate contacts are provided by residues Gly173 and Val193 to Thr194.

This sequence belongs to the thiamine-phosphate synthase family. Mg(2+) is required as a cofactor.

The catalysed reaction is 2-[(2R,5Z)-2-carboxy-4-methylthiazol-5(2H)-ylidene]ethyl phosphate + 4-amino-2-methyl-5-(diphosphooxymethyl)pyrimidine + 2 H(+) = thiamine phosphate + CO2 + diphosphate. The enzyme catalyses 2-(2-carboxy-4-methylthiazol-5-yl)ethyl phosphate + 4-amino-2-methyl-5-(diphosphooxymethyl)pyrimidine + 2 H(+) = thiamine phosphate + CO2 + diphosphate. It carries out the reaction 4-methyl-5-(2-phosphooxyethyl)-thiazole + 4-amino-2-methyl-5-(diphosphooxymethyl)pyrimidine + H(+) = thiamine phosphate + diphosphate. It participates in cofactor biosynthesis; thiamine diphosphate biosynthesis; thiamine phosphate from 4-amino-2-methyl-5-diphosphomethylpyrimidine and 4-methyl-5-(2-phosphoethyl)-thiazole: step 1/1. In terms of biological role, condenses 4-methyl-5-(beta-hydroxyethyl)thiazole monophosphate (THZ-P) and 2-methyl-4-amino-5-hydroxymethyl pyrimidine pyrophosphate (HMP-PP) to form thiamine monophosphate (TMP). The chain is Thiamine-phosphate synthase from Dictyoglomus thermophilum (strain ATCC 35947 / DSM 3960 / H-6-12).